A 454-amino-acid chain; its full sequence is Protein disulfide-isomerase TMX3 (454 aa).

A signal peptide spans 1 to 24 (MAAWKSWAALRLCATVVLLDMVVC). One can recognise a Thioredoxin domain in the interval 25–128 (KGFVEDLDES…KDDIIEFAHR (104 aa)). Residues 25 to 375 (KGFVEDLDES…TIVSIFKSSP (351 aa)) lie on the Lumenal side of the membrane. Active-site nucleophile residues include Cys-53 and Cys-56. A disulfide bond links Cys-53 and Cys-56. N-linked (GlcNAc...) asparagine glycans are attached at residues Asn-258 and Asn-313. Residues 376 to 396 (LMGCFLFGLPLGVISIMCYGI) form a helical membrane-spanning segment. Topologically, residues 397–454 (YTADTDGGYIEERYEVSKSENENQEQIEESKEQQEPSSGGSVVPTVQEPKDVLEKKKD) are cytoplasmic. The disordered stretch occupies residues 412–454 (VSKSENENQEQIEESKEQQEPSSGGSVVPTVQEPKDVLEKKKD). A compositionally biased stretch (basic and acidic residues) spans 444-454 (EPKDVLEKKKD). A Di-lysine motif motif is present at residues 451-454 (KKKD).

It belongs to the protein disulfide isomerase family.

The protein localises to the endoplasmic reticulum membrane. The catalysed reaction is Catalyzes the rearrangement of -S-S- bonds in proteins.. Its function is as follows. Probable disulfide isomerase, which participates in the folding of proteins containing disulfide bonds. May act as a dithiol oxidase. Acts as a regulator of endoplasmic reticulum-mitochondria contact sites via its ability to regulate redox signals. The protein is Protein disulfide-isomerase TMX3 (TMX3) of Pongo abelii (Sumatran orangutan).